Consider the following 207-residue polypeptide: Guanylate kinase (207 aa).

The Guanylate kinase-like domain occupies 6-185 (GLLIVLSGPS…AKQRIQSIVE (180 aa)). 13–20 (GPSGVGKG) lines the ATP pocket.

It belongs to the guanylate kinase family.

Its subcellular location is the cytoplasm. The enzyme catalyses GMP + ATP = GDP + ADP. Its function is as follows. Essential for recycling GMP and indirectly, cGMP. This Staphylococcus saprophyticus subsp. saprophyticus (strain ATCC 15305 / DSM 20229 / NCIMB 8711 / NCTC 7292 / S-41) protein is Guanylate kinase.